The chain runs to 462 residues: MRLLDSVAKEKIKLDKKDISIYLCGPTVYDDAHLGHARSSVCFDLLRRVLLANGNRVKFARNYTDIDDKILKKMAQSGQTLEEITEFYIKSYEEDMRVLNVLDPDFKPRATHYITAMLDLIKKLAKDGFVYTLEDGIYFDTSKDEKYLSLSNRNLEENISRLSNEVQKRNESDFVLWKFDENFYESEFGKGRPGWHTECVAMIDSIFENTLDIHAGGIDLLFPHHENEAAQCRCGCKRKLANIWLHNGFVKIDGEKMSKSLNNSFFIKDALKEFMGEALRFYLLSSHYRSHFNYSLSDLENAKKRLDKFYRLKKRLDLGEISDFDVLNDIEIKSEIAKQILEILNDDLNISKALALLDDFISSANLELDKESKNKILKQNIKEALSELAKIFGFGFMDTTLYFQWGVSKEEREEIEKLILERTEAKKNKDFNTADAIRERLSSKKITLLDTPNGTIWEKINA.

Cys-24 lines the Zn(2+) pocket. The 'HIGH' region motif lies at 26 to 36 (PTVYDDAHLGH). Residues Cys-199, His-224, and Glu-228 each contribute to the Zn(2+) site. The 'KMSKS' region signature appears at 256-260 (KMSKS). Lys-259 is a binding site for ATP.

The protein belongs to the class-I aminoacyl-tRNA synthetase family. As to quaternary structure, monomer. Zn(2+) is required as a cofactor.

The protein resides in the cytoplasm. The catalysed reaction is tRNA(Cys) + L-cysteine + ATP = L-cysteinyl-tRNA(Cys) + AMP + diphosphate. The protein is Cysteine--tRNA ligase of Campylobacter jejuni subsp. jejuni serotype O:6 (strain 81116 / NCTC 11828).